Here is a 257-residue protein sequence, read N- to C-terminus: Distal membrane-arm assembly complex protein 2 (257 aa).

Ser-253 is modified (phosphoserine).

The protein belongs to the ATP synthase subunit s family. As to quaternary structure, interacts with incompletely assembled mitochondrial NADH:ubiquinone oxidoreductase complex (complex I).

Its subcellular location is the mitochondrion. In terms of biological role, required for the assembly of the mitochondrial NADH:ubiquinone oxidoreductase complex (complex I). Involved in the assembly of the distal region of complex I. This chain is Distal membrane-arm assembly complex protein 2, found in Homo sapiens (Human).